The primary structure comprises 190 residues: Voltage-dependent calcium channel gamma-like subunit (190 aa).

Transmembrane regions (helical) follow at residues 25–45 (FIRT…SVSI), 96–116 (ALAV…QLCE), 131–151 (LLVS…LLRN), and 155–175 (LIGF…LFLN).

The protein belongs to the PMP-22/EMP/MP20 family. CACNG subfamily. In terms of assembly, the L-type calcium channel is composed of five subunits: alpha-1, alpha-2/delta, beta and gamma.

Its subcellular location is the membrane. Its function is as follows. Thought to stabilize the calcium channel in an inactivated (closed) state. Modulates calcium current when coexpressed with CACNA1G. In Homo sapiens (Human), this protein is Voltage-dependent calcium channel gamma-like subunit.